We begin with the raw amino-acid sequence, 381 residues long: Succinyl-diaminopimelate desuccinylase (381 aa).

His72 lines the Zn(2+) pocket. Asp74 is a catalytic residue. Asp103 contributes to the Zn(2+) binding site. Catalysis depends on Glu133, which acts as the Proton acceptor. Glu134, Glu163, and His348 together coordinate Zn(2+).

The protein belongs to the peptidase M20A family. DapE subfamily. As to quaternary structure, homodimer. Requires Zn(2+) as cofactor. It depends on Co(2+) as a cofactor.

It catalyses the reaction N-succinyl-(2S,6S)-2,6-diaminopimelate + H2O = (2S,6S)-2,6-diaminopimelate + succinate. It functions in the pathway amino-acid biosynthesis; L-lysine biosynthesis via DAP pathway; LL-2,6-diaminopimelate from (S)-tetrahydrodipicolinate (succinylase route): step 3/3. Catalyzes the hydrolysis of N-succinyl-L,L-diaminopimelic acid (SDAP), forming succinate and LL-2,6-diaminopimelate (DAP), an intermediate involved in the bacterial biosynthesis of lysine and meso-diaminopimelic acid, an essential component of bacterial cell walls. This chain is Succinyl-diaminopimelate desuccinylase, found in Anaplasma marginale (strain Florida).